The sequence spans 154 residues: Aspartate carbamoyltransferase regulatory chain (154 aa).

4 residues coordinate Zn(2+): Cys-109, Cys-114, Cys-138, and Cys-141.

Belongs to the PyrI family. Contains catalytic and regulatory chains. The cofactor is Zn(2+).

Functionally, involved in allosteric regulation of aspartate carbamoyltransferase. This Sodalis glossinidius (strain morsitans) protein is Aspartate carbamoyltransferase regulatory chain.